Here is an 82-residue protein sequence, read N- to C-terminus: Penaeidin-3b (82 aa).

Positions 1–19 (MRLVVCLVFLASFALVCQG) are cleaved as a signal peptide. Q20 is modified (pyrrolidone carboxylic acid). Disulfide bonds link C51–C66, C55–C73, and C67–C74. S81 is subject to Serine amide.

This sequence belongs to the penaeidin family. Higher expression in hemocytes and to a lesser extent in heart, testis, gills, intestine, lymphoid organ and hepatopancreas. Traces in eyes and subcuticular epithelium. Not present in the brain.

The protein localises to the cytoplasmic granule. In terms of biological role, antibacterial activity against M.luteus and E.coli bacteria. Antifungal activity against N.crassa and F.oxysporum. Presents chitin-binding activity. This is Penaeidin-3b from Penaeus vannamei (Whiteleg shrimp).